A 243-amino-acid chain; its full sequence is Ubiquinone/menaquinone biosynthesis C-methyltransferase UbiE (243 aa).

Residues T69, D90, and 116-117 (DA) each bind S-adenosyl-L-methionine.

It belongs to the class I-like SAM-binding methyltransferase superfamily. MenG/UbiE family.

It catalyses the reaction a 2-demethylmenaquinol + S-adenosyl-L-methionine = a menaquinol + S-adenosyl-L-homocysteine + H(+). The enzyme catalyses a 2-methoxy-6-(all-trans-polyprenyl)benzene-1,4-diol + S-adenosyl-L-methionine = a 5-methoxy-2-methyl-3-(all-trans-polyprenyl)benzene-1,4-diol + S-adenosyl-L-homocysteine + H(+). Its pathway is quinol/quinone metabolism; menaquinone biosynthesis; menaquinol from 1,4-dihydroxy-2-naphthoate: step 2/2. The protein operates within cofactor biosynthesis; ubiquinone biosynthesis. Methyltransferase required for the conversion of demethylmenaquinol (DMKH2) to menaquinol (MKH2) and the conversion of 2-polyprenyl-6-methoxy-1,4-benzoquinol (DDMQH2) to 2-polyprenyl-3-methyl-6-methoxy-1,4-benzoquinol (DMQH2). This Cupriavidus pinatubonensis (strain JMP 134 / LMG 1197) (Cupriavidus necator (strain JMP 134)) protein is Ubiquinone/menaquinone biosynthesis C-methyltransferase UbiE.